Reading from the N-terminus, the 180-residue chain is Acireductone dioxygenase 1 (180 aa).

The Fe(2+) site is built by H82, H84, E88, and H127. The Ni(2+) site is built by H82, H84, E88, and H127.

The protein belongs to the acireductone dioxygenase (ARD) family. Fe(2+) is required as a cofactor. Ni(2+) serves as cofactor.

It is found in the cytoplasm. The protein resides in the nucleus. It catalyses the reaction 1,2-dihydroxy-5-(methylsulfanyl)pent-1-en-3-one + O2 = 4-methylsulfanyl-2-oxobutanoate + formate + 2 H(+). The catalysed reaction is 1,2-dihydroxy-5-(methylsulfanyl)pent-1-en-3-one + O2 = 3-(methylsulfanyl)propanoate + CO + formate + 2 H(+). It participates in amino-acid biosynthesis; L-methionine biosynthesis via salvage pathway; L-methionine from S-methyl-5-thio-alpha-D-ribose 1-phosphate: step 5/6. In terms of biological role, catalyzes 2 different reactions between oxygen and the acireductone 1,2-dihydroxy-3-keto-5-methylthiopentene (DHK-MTPene) depending upon the metal bound in the active site. Fe-containing acireductone dioxygenase (Fe-ARD) produces formate and 2-keto-4-methylthiobutyrate (KMTB), the alpha-ketoacid precursor of methionine in the methionine recycle pathway. Ni-containing acireductone dioxygenase (Ni-ARD) produces methylthiopropionate, carbon monoxide and formate, and does not lie on the methionine recycle pathway. This is Acireductone dioxygenase 1 from Sorghum bicolor (Sorghum).